The primary structure comprises 584 residues: Pectinesterase 1 (584 aa).

The N-terminal stretch at 1–42 is a signal peptide; it reads MTHIKEFFTKLSESSSNQNISNIPKKKKKLFLALFATLLVVA. N-linked (GlcNAc...) asparagine glycosylation is found at N108, N129, and N226. The substrate site is built by T348 and Q378. D401 functions as the Proton donor in the catalytic mechanism. An intrachain disulfide couples C415 to C435. Residue D422 is the Nucleophile of the active site. Residues R490 and W492 each coordinate substrate.

It in the N-terminal section; belongs to the PMEI family. This sequence in the C-terminal section; belongs to the pectinesterase family. As to expression, expressed at high levels in flower buds, shoots and young leaves, and at lower levels in young fruit, young bark and juice vesicles. Not expressed at significant levels in leaf abscission zones following ethylene treatment or in mature leaves. In fruit abscission zones, expression was initially undetectable but increased markedly following ethylene treatment.

It localises to the secreted. It is found in the cell wall. It carries out the reaction [(1-&gt;4)-alpha-D-galacturonosyl methyl ester](n) + n H2O = [(1-&gt;4)-alpha-D-galacturonosyl](n) + n methanol + n H(+). Its pathway is glycan metabolism; pectin degradation; 2-dehydro-3-deoxy-D-gluconate from pectin: step 1/5. Its function is as follows. Acts in the modification of cell walls via demethylesterification of cell wall pectin. The protein is Pectinesterase 1 (PECS-1.1) of Citrus sinensis (Sweet orange).